Reading from the N-terminus, the 468-residue chain is Aspartate ammonia-lyase (468 aa).

L-aspartate contacts are provided by Thr-99, Ser-138, Thr-139, Asn-140, and Thr-185. The SS loop stretch occupies residues Gly-315–Asn-324. Ser-316 acts as the Proton acceptor in catalysis. 2 residues coordinate L-aspartate: Ser-317 and Lys-322.

It belongs to the class-II fumarase/aspartase family. Aspartase subfamily. As to quaternary structure, homotetramer.

It carries out the reaction L-aspartate = fumarate + NH4(+). Catalyzes the reversible conversion of L-aspartate to fumarate and ammonia. The chain is Aspartate ammonia-lyase (aspA) from Helicobacter pylori (strain ATCC 700392 / 26695) (Campylobacter pylori).